The chain runs to 4349 residues: Dynein heavy chain, cytoplasmic (4349 aa).

Residues 1 to 1907 form a stem region; it reads MEVTSAAAPS…YIKMANAKLN (1907 aa). Coiled-coil stretches lie at residues 459–480, 1178–1215, 1266–1293, 1334–1354, 1560–1577, and 1640–1670; these read WEEN…RNEK, LMKF…STAQ, SQWE…QAKI, ESRI…KEAL, YKEF…LNRV, and NIPN…EKER. AAA stretches follow at residues 1908–2133, 2201–2459, 2565–2814, and 2908–3177; these read YGFE…VLVS, NAIR…FTTA, EVNT…WVRG, and TFCE…QGKV. Residue 1946–1953 coordinates ATP; the sequence is GPAGTGKT. Positions 2194-2217 form a coiled coil; that stretch reads ANLEALENAIRELAAERHLVVNEL. Residues 2239–2246, 2604–2611, and 2946–2953 contribute to the ATP site; these read GNSGSGKS, GPPGSGKT, and GVSGSGKT. Coiled coils occupy residues 3186-3294, 3420-3477, and 3774-3807; these read LDFV…LAKA, GPLK…EMSR, and DNVI…VEEI. Residues 3186 to 3477 form a stalk region; that stretch reads LDFVTQYIKL…TQAIKAEMSR (292 aa). 2 AAA regions span residues 3563–3792 and 4001–4213; these read LSTA…EISA and AERF…IVDT.

It belongs to the dynein heavy chain family. Consists of at least two heavy chains and a number of intermediate and light chains.

The protein resides in the cytoplasm. It is found in the cytoskeleton. Its function is as follows. Cytoplasmic dynein acts as a motor for the intracellular retrograde motility of vesicles and organelles along microtubules. Dynein has ATPase activity; the force-producing power stroke is thought to occur on release of ADP. This Fusarium vanettenii (Neocosmospora pisi) protein is Dynein heavy chain, cytoplasmic (DHC1).